A 2479-amino-acid chain; its full sequence is Centrosomal protein of 290 kDa (2479 aa).

The self-association (with itself or C-terminus) stretch occupies residues 1 to 695; that stretch reads MPPNINWKEI…IESKNAEGIF (695 aa). Coiled-coil stretches lie at residues 59–565, 598–664, 697–931, 958–1027, 1071–1498, 1533–1584, and 1635–2452; these read MKMK…ERGK, SLKN…MQKD, ASLH…VCEK, SLSE…IEQA, QRAE…ILSR, HTLK…LHIL, and DSLS…SEQL. The segment covering 149 to 163 has biased composition (basic and acidic residues); the sequence is ALRNEEAENENSKLR. The disordered stretch occupies residues 149-168; it reads ALRNEEAENENSKLRRENKR. Positions 696–896 are interaction with IQCB1; it reads DASLHLKAQV…TVLQVNEKSL (201 aa). Residues 1966 to 2479 are self-association (with itself or N-terminus); it reads TTGMTVDQVL…EESPVNFPIY (514 aa). The segment at 2458–2479 is disordered; sequence SPVAASEEFEDEEESPVNFPIY.

As to quaternary structure, part of the tectonic-like complex (also named B9 complex). Interacts with ATF4 via its N-terminal region. Associates with the BBSome complex, interacting (via N-terminus) with BBS4. Interacts with IQCB1/NPHP5; IQCB1 and CEP290/NPHP6 are proposed to form a functional NPHP5-6 module localized to the centrosome. Interacts with NPHP4; the interaction likely requires additional interactors. Interacts with ZNF423, FAM161A, CEP162, CEP162, CEP131, TALPID3, CCDC13, CC2D2A, RPGRIP1. Can self-associate (homo- or heteromeric). Interacts with CCP110; required for suppressing cilia formation. Interacts with RPGR. Associates (via C-terminus) with microtubules; association to microtubule is reduced in response to cellular stress, such as ultraviolet light (UV) radiation or heat shock, in a process that requires p38 MAP kinase signaling. Interacts with FAM161A. Interacts with PCM1. Interacts with CCDC66. Interacts with ARMC9 and CSPP1. Ubiquitinated. May undergo monoubiquitination; monoubiquitination is inhibited in response to cellular stress, such as ultraviolet light (UV) radiation or heat shock, but does not cause its displacement from centriolar satellites. In terms of tissue distribution, ubiquitous. Expressed strongly in placenta and weakly in brain.

It is found in the cytoplasm. It localises to the cytoskeleton. Its subcellular location is the microtubule organizing center. The protein localises to the centrosome. The protein resides in the centriolar satellite. It is found in the nucleus. It localises to the cell projection. Its subcellular location is the cilium. The protein localises to the cilium basal body. The protein resides in the centriole. It is found in the cytoplasmic vesicle. Functionally, involved in early and late steps in cilia formation. Its association with CCP110 is required for inhibition of primary cilia formation by CCP110. May play a role in early ciliogenesis in the disappearance of centriolar satellites and in the transition of primary ciliar vesicles (PCVs) to capped ciliary vesicles (CCVs). Required for the centrosomal recruitment of RAB8A and for the targeting of centriole satellite proteins to centrosomes such as of PCM1. Required for the correct localization of ciliary and phototransduction proteins in retinal photoreceptor cells; may play a role in ciliary transport processes. Required for efficient recruitment of RAB8A to primary cilium. In the ciliary transition zone is part of the tectonic-like complex which is required for tissue-specific ciliogenesis and may regulate ciliary membrane composition. Involved in regulation of the BBSome complex integrity, specifically for presence of BBS2, BBS5 and BBS8/TTC8 in the complex, and in ciliary targeting of selected BBSome cargos. May play a role in controlling entry of the BBSome complex to cilia possibly implicating IQCB1/NPHP5. Activates ATF4-mediated transcription. The sequence is that of Centrosomal protein of 290 kDa (CEP290) from Homo sapiens (Human).